The following is a 596-amino-acid chain: DNA mismatch repair protein MutL (596 aa).

This sequence belongs to the DNA mismatch repair MutL/HexB family.

This protein is involved in the repair of mismatches in DNA. It is required for dam-dependent methyl-directed DNA mismatch repair. May act as a 'molecular matchmaker', a protein that promotes the formation of a stable complex between two or more DNA-binding proteins in an ATP-dependent manner without itself being part of a final effector complex. This Leptospira borgpetersenii serovar Hardjo-bovis (strain JB197) protein is DNA mismatch repair protein MutL.